The chain runs to 1196 residues: DNA excision repair protein ERCC-5 homolog (1196 aa).

The segment at 1-78 (MGVQGLWKLL…RIRPIFVFDG (78 aa)) is N-domain. Mg(2+) is bound at residue Asp-30. The DNA-binding; may bind to the undamaged single-strand DNA of the DNA repair bubble stretch occupies residues 31–67 (ISIWLNQAVKGARDRQGNAIQNAHLLTLFHRLCKLLF). A Mg(2+)-binding site is contributed by Asp-77. The interval 79–818 (EAPLLKRQTL…LQLFGIPYIV (740 aa)) is spacer region. 4 disordered regions span residues 152–176 (PLED…MNQK), 302–321 (KQEE…NSSQ), 629–661 (QTTQ…SSAM), and 722–758 (AVEE…DDVS). Over residues 154 to 168 (EDNENNSSEEEEERE) the composition is skewed to acidic residues. The segment covering 311 to 321 (PPQSITFNSSQ) has biased composition (polar residues). Positions 722–731 (AVEEGNSGSQ) are enriched in polar residues. The segment covering 734 to 755 (PLEHDSGEPHEQSNSEESKDLD) has biased composition (basic and acidic residues). Positions 819 to 914 (APMEAEAQCA…VSAMEILNEF (96 aa)) are I-domain. The Mg(2+) site is built by Glu-822, Glu-824, Asp-843, and Asp-845. Residues 853–869 (HVYKNFFSQNKHVEYYQ) form a DNA-binding; may bind to the undamaged single-strand DNA of the DNA repair bubble region. Residues 881–913 (RSKLINLAYLLGSDYTEGIPTVGYVSAMEILNE) are DNA-binding; H2TH (helix-2turn-helix) motif which binds double-stranded DNA. A Mg(2+)-binding site is contributed by Asp-894. Residues 945–951 (TKVKKKL) form a DNA-binding; may bind double-stranded DNA region. The interval 1075–1196 (CTNQRKGQKT…KTMKETVKRK (122 aa)) is disordered. The Nuclear localization signal 1 signature appears at 1079 to 1095 (RKGQKTNTKSQGTKRRK). Low complexity predominate over residues 1119-1130 (SSKAYSSDGSSS). The segment covering 1142 to 1158 (KQSQSGIVGRQKASNKV) has biased composition (polar residues). The Nuclear localization signal 2 motif lies at 1179 to 1196 (FQGKKTKSKTMKETVKRK).

Belongs to the XPG/RAD2 endonuclease family. XPG subfamily. In terms of assembly, monomer. Homodimer. Mg(2+) serves as cofactor.

It is found in the nucleus. The protein resides in the chromosome. Single-stranded structure-specific DNA endonuclease involved in DNA excision repair. Makes the 3'incision in DNA nucleotide excision repair (NER). Binds and bends DNA repair bubble substrate and breaks base stacking at the single-strand/double-strand DNA junction of the DNA bubble. Plays a role in base excision repair (BER) by promoting the binding of DNA glycosylase to its substrate and increasing DNA glycosylase catalytic activity that removes oxidized pyrimidines from DNA. Involved in transcription-coupled nucleotide excision repair (TCR) which allows RNA polymerase II-blocking lesions to be rapidly removed from the transcribed strand of active genes. Required for DNA replication fork maintenance and preservation of genomic stability. Involved in homologous recombination repair (HRR) induced by DNA replication stress. During HRR, binds to the replication fork with high specificity and stabilizes it. In Xenopus laevis (African clawed frog), this protein is DNA excision repair protein ERCC-5 homolog (ercc5).